The primary structure comprises 362 residues: Alanine racemase (362 aa).

Lysine 35 acts as the Proton acceptor; specific for D-alanine in catalysis. An N6-(pyridoxal phosphate)lysine modification is found at lysine 35. Residue arginine 130 participates in substrate binding. Tyrosine 257 (proton acceptor; specific for L-alanine) is an active-site residue. Methionine 305 contributes to the substrate binding site.

This sequence belongs to the alanine racemase family. Pyridoxal 5'-phosphate serves as cofactor.

It catalyses the reaction L-alanine = D-alanine. It participates in amino-acid biosynthesis; D-alanine biosynthesis; D-alanine from L-alanine: step 1/1. Functionally, catalyzes the interconversion of L-alanine and D-alanine. May also act on other amino acids. The polypeptide is Alanine racemase (alr) (Nitrosomonas europaea (strain ATCC 19718 / CIP 103999 / KCTC 2705 / NBRC 14298)).